The primary structure comprises 347 residues: Quinolinate synthase (347 aa).

Iminosuccinate is bound by residues His47 and Ser68. Cys113 contributes to the [4Fe-4S] cluster binding site. Iminosuccinate contacts are provided by residues 139–141 (YAN) and Ser156. Cys200 contributes to the [4Fe-4S] cluster binding site. Iminosuccinate-binding positions include 226–228 (HPE) and Thr243. Cys297 contacts [4Fe-4S] cluster.

Belongs to the quinolinate synthase family. Type 1 subfamily. [4Fe-4S] cluster is required as a cofactor.

The protein resides in the cytoplasm. It catalyses the reaction iminosuccinate + dihydroxyacetone phosphate = quinolinate + phosphate + 2 H2O + H(+). It participates in cofactor biosynthesis; NAD(+) biosynthesis; quinolinate from iminoaspartate: step 1/1. Functionally, catalyzes the condensation of iminoaspartate with dihydroxyacetone phosphate to form quinolinate. This is Quinolinate synthase from Escherichia coli (strain K12 / MC4100 / BW2952).